A 193-amino-acid polypeptide reads, in one-letter code: ATP-dependent protease subunit HslV (193 aa).

Residue Thr12 is part of the active site. Ala167, Cys170, and Thr173 together coordinate Na(+).

This sequence belongs to the peptidase T1B family. HslV subfamily. A double ring-shaped homohexamer of HslV is capped on each side by a ring-shaped HslU homohexamer. The assembly of the HslU/HslV complex is dependent on binding of ATP.

The protein localises to the cytoplasm. The catalysed reaction is ATP-dependent cleavage of peptide bonds with broad specificity.. Allosterically activated by HslU binding. Protease subunit of a proteasome-like degradation complex believed to be a general protein degrading machinery. This is ATP-dependent protease subunit HslV from Bartonella quintana (strain Toulouse) (Rochalimaea quintana).